The primary structure comprises 239 residues: Large ribosomal subunit protein bL25 (239 aa).

Positions 211-239 (KGKKDKEDEEAEKGTSVASPTTATGGTKK) are disordered. Positions 226–239 (SVASPTTATGGTKK) are enriched in polar residues.

Belongs to the bacterial ribosomal protein bL25 family. CTC subfamily. As to quaternary structure, part of the 50S ribosomal subunit; part of the 5S rRNA/L5/L18/L25 subcomplex. Contacts the 5S rRNA. Binds to the 5S rRNA independently of L5 and L18.

This is one of the proteins that binds to the 5S RNA in the ribosome where it forms part of the central protuberance. In Endomicrobium trichonymphae, this protein is Large ribosomal subunit protein bL25.